Here is a 675-residue protein sequence, read N- to C-terminus: Methionine--tRNA ligase (675 aa).

Positions 15–25 (PYANGSIHLGH) match the 'HIGH' region motif. Residues C146, C149, C159, and C162 each contribute to the Zn(2+) site. The 'KMSKS' region motif lies at 332–336 (KMSKS). K335 provides a ligand contact to ATP. Residues 573 to 675 (DFAKVDMRIA…SGAQPGMQVK (103 aa)) form the tRNA-binding domain.

It belongs to the class-I aminoacyl-tRNA synthetase family. MetG type 1 subfamily. Homodimer. Zn(2+) is required as a cofactor.

Its subcellular location is the cytoplasm. It catalyses the reaction tRNA(Met) + L-methionine + ATP = L-methionyl-tRNA(Met) + AMP + diphosphate. Its function is as follows. Is required not only for elongation of protein synthesis but also for the initiation of all mRNA translation through initiator tRNA(fMet) aminoacylation. This is Methionine--tRNA ligase from Yersinia pseudotuberculosis serotype IB (strain PB1/+).